Reading from the N-terminus, the 845-residue chain is Protein translocase subunit SecA 1 (845 aa).

Residues Gln-85, 103-107, and Asp-492 each bind ATP; that span reads GEGKT.

It belongs to the SecA family. Monomer and homodimer. Part of the essential Sec protein translocation apparatus which comprises SecA, SecYEG and auxiliary proteins SecDF. Other proteins may also be involved.

The protein resides in the cell membrane. It localises to the cytoplasm. The enzyme catalyses ATP + H2O + cellular proteinSide 1 = ADP + phosphate + cellular proteinSide 2.. Part of the Sec protein translocase complex. Interacts with the SecYEG preprotein conducting channel. Has a central role in coupling the hydrolysis of ATP to the transfer of proteins into and across the cell membrane, serving as an ATP-driven molecular motor driving the stepwise translocation of polypeptide chains across the membrane. The sequence is that of Protein translocase subunit SecA 1 from Corynebacterium efficiens (strain DSM 44549 / YS-314 / AJ 12310 / JCM 11189 / NBRC 100395).